Reading from the N-terminus, the 382-residue chain is Methenyltetrahydrofolate synthase domain-containing protein (382 aa).

The region spanning 306–382 (TTVYLSDIPP…QAKCVSSQKM (77 aa)) is the RRM domain.

The chain is Methenyltetrahydrofolate synthase domain-containing protein (mthfsd) from Danio rerio (Zebrafish).